Here is a 209-residue protein sequence, read N- to C-terminus: Uracil phosphoribosyltransferase (209 aa).

5-phospho-alpha-D-ribose 1-diphosphate-binding positions include Arg-79, Arg-104, and 131–139; that span reads DPMLATGVS. Residues Ile-194 and 199-201 each bind uracil; that span reads GDA. Asp-200 serves as a coordination point for 5-phospho-alpha-D-ribose 1-diphosphate.

This sequence belongs to the UPRTase family. Requires Mg(2+) as cofactor.

It catalyses the reaction UMP + diphosphate = 5-phospho-alpha-D-ribose 1-diphosphate + uracil. It functions in the pathway pyrimidine metabolism; UMP biosynthesis via salvage pathway; UMP from uracil: step 1/1. With respect to regulation, allosterically activated by GTP. Its function is as follows. Catalyzes the conversion of uracil and 5-phospho-alpha-D-ribose 1-diphosphate (PRPP) to UMP and diphosphate. The chain is Uracil phosphoribosyltransferase from Thermotoga petrophila (strain ATCC BAA-488 / DSM 13995 / JCM 10881 / RKU-1).